Consider the following 168-residue polypeptide: Nicotinamide-nucleotide adenylyltransferase (168 aa).

ATP is bound by residues Arg8, Phe9, His13, His16, Phe119, Arg121, Tyr124, Gly126, Thr127, and Arg130.

This sequence belongs to the archaeal NMN adenylyltransferase family. In terms of assembly, homohexamer existing as a trimer of dimers.

It is found in the cytoplasm. It catalyses the reaction beta-nicotinamide D-ribonucleotide + ATP + H(+) = diphosphate + NAD(+). It functions in the pathway cofactor biosynthesis; NAD(+) biosynthesis; NAD(+) from nicotinamide D-ribonucleotide: step 1/1. Catalyzes the formation of NAD(+) from nicotinamide mononucleotide (NMN) and ATP. The sequence is that of Nicotinamide-nucleotide adenylyltransferase from Methanocaldococcus jannaschii (strain ATCC 43067 / DSM 2661 / JAL-1 / JCM 10045 / NBRC 100440) (Methanococcus jannaschii).